The sequence spans 809 residues: Hydrazine synthase subunit alpha (809 aa).

Positions 1–27 (MGKRKLGVIASAFVAGALVCGSTLVNA) are cleaved as a signal peptide. Cys303 serves as a coordination point for Zn(2+). Heme contacts are provided by Cys583 and Cys586. Zn(2+) is bound at residue His587. Tyr591, Cys685, Cys688, His689, and His772 together coordinate heme. Residues 633–792 (KGVKHGEDVV…AIVEWIDLGA (160 aa)) form the Cytochrome c domain.

As to quaternary structure, part of the hydrazine synthase complex that forms an elongated dimer of heterotrimers composed of one alpha, one beta and one gamma subunit. Requires heme c as cofactor.

It is found in the anammoxosome. It carries out the reaction hydrazine + 3 Fe(III)-[cytochrome c] + H2O = nitric oxide + 3 Fe(II)-[cytochrome c] + NH4(+) + 2 H(+). Its pathway is nitrogen metabolism. In terms of biological role, component of the hydrazine synthase complex that catalyzes the condensation of nitric oxide (NO) with ammonium to form hydrazine. The alpha subunit catalyzes the second half-reaction, i.e. the condensation of hydroxylamine formed in the active site of the gamma subunit with ammonia, yielding hydrazine. Is involved in anaerobic ammonium oxidation (anammox), a biological process in which nitrite is used as the electron acceptor in the conversion of ammonium to dinitrogen gas (N2) and water; this bacterial process has a major role in the Earth's nitrogen cycle and has been estimated to synthesize up to 50% of the dinitrogen gas emitted into our atmosphere from the oceans. This is Hydrazine synthase subunit alpha from Kuenenia stuttgartiensis.